The primary structure comprises 195 residues: Porimin (195 aa).

A signal peptide spans 1–23; it reads MALCARAALLLGVLQVLALLGAA. Over 24 to 152 the chain is Extracellular; the sequence is QDPTDAQGSA…PTKGKGSKFD (129 aa). Residues asparagine 36, asparagine 45, asparagine 51, asparagine 59, asparagine 109, and asparagine 115 are each glycosylated (N-linked (GlcNAc...) asparagine). The segment at 99-127 is disordered; sequence VTPTASKSTPNASASPNSTHTSASMTTPA. Polar residues predominate over residues 101 to 126; sequence PTASKSTPNASASPNSTHTSASMTTP. Residues 153 to 173 traverse the membrane as a helical segment; it reads AGSFVGGIVLTLGVLSILYIG. Residues 174–195 lie on the Cytoplasmic side of the membrane; that stretch reads CKMYYSRRGIRYRSIDEHDAII. A Phosphoserine modification is found at serine 187.

Belongs to the CD164 family.

Its subcellular location is the membrane. Its function is as follows. Implicated in oncotic cell death, characterized by cell swelling, organelle swelling, vacuolization and increased membrane permeability. The chain is Porimin (Tmem123) from Mus musculus (Mouse).